The chain runs to 811 residues: TLR4 interactor with leucine rich repeats (811 aa).

A signal peptide spans 1-25; the sequence is MEGVGAVRFWLVVCGCLAFPPRAES. One can recognise an LRRNT domain in the interval 26 to 57; it reads VCPERCDCQHPQHLLCTNRGLRAVPKTSSLPS. Topologically, residues 26–696 are extracellular; the sequence is VCPERCDCQH…AGGRGGVDYQ (671 aa). 12 LRR repeats span residues 61 to 81, 84 to 105, 108 to 129, 132 to 153, 156 to 177, 180 to 201, 204 to 223, 230 to 251, 254 to 275, 278 to 298, 302 to 323, and 326 to 347; these read VLTY…DFHR, QLRR…TFEK, RLEE…TLAP, KLRI…SFEG, SLVK…VFAP, NLLY…AFTQ, KLRF…RHAA, SLST…VFQH, RLGL…AFWG, ALRE…TLLE, SLEA…TFGH, and RLRE…IFAA. N-linked (GlcNAc...) asparagine glycosylation occurs at N73. The region spanning 359-416 is the LRRCT domain; it reads NGWTCDCRLRGLKRWMGNWHSQGRLLTVFVQCRHPPALRGKYLDYLDDQLLQNGSCVD. The N-linked (GlcNAc...) asparagine glycan is linked to N411. Disordered regions lie at residues 414–460 and 486–562; these read CVDP…QQRG and RRGP…QQGR. Residues 421-430 show a composition bias toward polar residues; the sequence is PTAGSRQWPI. Low complexity-rich tracts occupy residues 440-460 and 494-508; these read PPAG…QQRG and QSPS…APQS. Over residues 510–519 the composition is skewed to basic and acidic residues; the sequence is DLHEKPERGR. A compositionally biased stretch (polar residues) spans 524 to 545; the sequence is NLPQTEPTPTSEPASGTPSARD. Residue N589 is glycosylated (N-linked (GlcNAc...) asparagine). Residues 697–717 form a helical membrane-spanning segment; that stretch reads LLTLVLLAINALLVLLALAAW. Residues 718-809 are Cytoplasmic-facing; it reads GSRWLRRKLR…RREDHLLQRF (92 aa). Position 798 is a phosphoserine (S798).

In terms of assembly, belongs to the lipopolysaccharide (LPS) receptor, a multi-protein complex containing at least CD14, MD-2 and TLR4. Interacts with TLR4; this interaction is greatly enhanced following LPS stimulation. Interacts with LPS. Post-translationally, N-glycolysaled. Highly expressed in cortical astrocytes and in cerebellar granule neurons.

It is found in the membrane. Its function is as follows. Component of the TLR4 signaling complex. Mediates the innate immune response to bacterial lipopolysaccharide (LPS) leading to cytokine secretion and the inflammatory response. This Rattus norvegicus (Rat) protein is TLR4 interactor with leucine rich repeats (Tril).